Consider the following 580-residue polypeptide: Probable mediator of RNA polymerase II transcription subunit 26a (580 aa).

The region spanning 108–183 is the TFIIS N-terminal domain; it reads DEVMRIRDIL…AEWKRLVDQW (76 aa). Composition is skewed to basic and acidic residues over residues 244 to 255, 280 to 290, and 299 to 309; these read RHSVESKHERKS, QTRREEADVRP, and VEPKRQTKQSR. The segment at 244-337 is disordered; sequence RHSVESKHER…RKLAGPQQDK (94 aa). The stretch at 347-368 forms a coiled coil; it reads FEFAKRKLQESYHQHENAKRQR.

Belongs to the Mediator complex subunit 26 family. Component of the Mediator complex.

The protein resides in the nucleus. Its function is as follows. Component of the Mediator complex, a coactivator involved in the regulated transcription of nearly all RNA polymerase II-dependent genes. Mediator functions as a bridge to convey information from gene-specific regulatory proteins to the basal RNA polymerase II transcription machinery. The Mediator complex, having a compact conformation in its free form, is recruited to promoters by direct interactions with regulatory proteins and serves for the assembly of a functional preinitiation complex with RNA polymerase II and the general transcription factors. May play a role in transcription elongation. This chain is Probable mediator of RNA polymerase II transcription subunit 26a (MED26A), found in Arabidopsis thaliana (Mouse-ear cress).